We begin with the raw amino-acid sequence, 371 residues long: Choline kinase B1 (371 aa).

It belongs to the choline/ethanolamine kinase family. Requires Mg(2+) as cofactor.

The enzyme catalyses choline + ATP = phosphocholine + ADP + H(+). The protein is Choline kinase B1 (ckb-1) of Caenorhabditis elegans.